The chain runs to 202 residues: Small ribosomal subunit protein uS4 (202 aa).

A disordered region spans residues Leu-15–Ser-43. The S4 RNA-binding domain occupies Gly-90 to Asn-152.

Belongs to the universal ribosomal protein uS4 family. Part of the 30S ribosomal subunit. Contacts protein S5. The interaction surface between S4 and S5 is involved in control of translational fidelity.

One of the primary rRNA binding proteins, it binds directly to 16S rRNA where it nucleates assembly of the body of the 30S subunit. In terms of biological role, with S5 and S12 plays an important role in translational accuracy. In Prochlorococcus marinus (strain SARG / CCMP1375 / SS120), this protein is Small ribosomal subunit protein uS4.